The following is a 123-amino-acid chain: UPF0102 protein PputW619_0932 (123 aa).

The protein belongs to the UPF0102 family.

This is UPF0102 protein PputW619_0932 from Pseudomonas putida (strain W619).